The chain runs to 520 residues: GMP synthase [glutamine-hydrolyzing] (520 aa).

A Glutamine amidotransferase type-1 domain is found at 9-202 (HVLIVDFGSQ…THKIAGLKGD (194 aa)). Cys-86 (nucleophile) is an active-site residue. Active-site residues include His-176 and Glu-178. One can recognise a GMPS ATP-PPase domain in the interval 203-395 (WTMKAFREEA…LGLPPQFVGR (193 aa)). 230–236 (SGGVDSS) serves as a coordination point for ATP.

In terms of assembly, homodimer.

The catalysed reaction is XMP + L-glutamine + ATP + H2O = GMP + L-glutamate + AMP + diphosphate + 2 H(+). It participates in purine metabolism; GMP biosynthesis; GMP from XMP (L-Gln route): step 1/1. Catalyzes the synthesis of GMP from XMP. The polypeptide is GMP synthase [glutamine-hydrolyzing] (Phenylobacterium zucineum (strain HLK1)).